The chain runs to 302 residues: Glutaminase (302 aa).

Positions 61, 111, 155, 162, 186, 238, and 256 each coordinate substrate.

Belongs to the glutaminase family. In terms of assembly, homotetramer.

It carries out the reaction L-glutamine + H2O = L-glutamate + NH4(+). The chain is Glutaminase from Pseudomonas putida (strain ATCC 700007 / DSM 6899 / JCM 31910 / BCRC 17059 / LMG 24140 / F1).